We begin with the raw amino-acid sequence, 943 residues long: UvrABC system protein A (943 aa).

Residue 31–38 (GLSGSGKS) participates in ATP binding. A C4-type zinc finger spans residues 253–280 (CPHCGYSVPELEPRLFSFNNPAGACPTC). 2 consecutive ABC transporter domains span residues 310-587 (WDRR…PHSI) and 607-937 (LDKK…RFLK). An ATP-binding site is contributed by 640 to 647 (GVSGSGKS). The segment at 740 to 766 (CEACQGDGVIKVEMHFLPDVYVPCEQC) adopts a C4-type zinc-finger fold.

Belongs to the ABC transporter superfamily. UvrA family. In terms of assembly, forms a heterotetramer with UvrB during the search for lesions.

It is found in the cytoplasm. Functionally, the UvrABC repair system catalyzes the recognition and processing of DNA lesions. UvrA is an ATPase and a DNA-binding protein. A damage recognition complex composed of 2 UvrA and 2 UvrB subunits scans DNA for abnormalities. When the presence of a lesion has been verified by UvrB, the UvrA molecules dissociate. This chain is UvrABC system protein A, found in Pasteurella multocida (strain Pm70).